The sequence spans 303 residues: UDP-N-acetylenolpyruvoylglucosamine reductase (303 aa).

In terms of domain architecture, FAD-binding PCMH-type spans 27–207; the sequence is KVGGISQVFY…TSISQKLQKI (181 aa). Residue R175 is part of the active site. S224 (proton donor) is an active-site residue. The active site involves E294.

Belongs to the MurB family. The cofactor is FAD.

It is found in the cytoplasm. It carries out the reaction UDP-N-acetyl-alpha-D-muramate + NADP(+) = UDP-N-acetyl-3-O-(1-carboxyvinyl)-alpha-D-glucosamine + NADPH + H(+). The protein operates within cell wall biogenesis; peptidoglycan biosynthesis. Cell wall formation. The sequence is that of UDP-N-acetylenolpyruvoylglucosamine reductase from Orientia tsutsugamushi (strain Boryong) (Rickettsia tsutsugamushi).